The chain runs to 689 residues: Glycine--tRNA ligase beta subunit (689 aa).

This sequence belongs to the class-II aminoacyl-tRNA synthetase family. In terms of assembly, tetramer of two alpha and two beta subunits.

The protein resides in the cytoplasm. The catalysed reaction is tRNA(Gly) + glycine + ATP = glycyl-tRNA(Gly) + AMP + diphosphate. This chain is Glycine--tRNA ligase beta subunit, found in Salmonella typhi.